A 565-amino-acid polypeptide reads, in one-letter code: Anaphase-promoting complex subunit 7 (565 aa).

TPR repeat units follow at residues 101-134, 169-202, 203-236, 237-270, 339-372, 373-406, 407-439, 442-474, 475-508, and 509-531; these read EIEV…RQRT, LDAI…LDWL, SVWI…LRDN, VDLL…DPYL, VQAL…APCR, LDCY…LGAN, AQTL…AQRP, VKAV…NQSD, CVLH…DPND, and QKSL…TQEE. An N6-acetyllysine modification is found at lysine 229. Positions 513–523 are enriched in basic and acidic residues; sequence EGMQKMEKEES. Positions 513 to 565 are disordered; the sequence is EGMQKMEKEESPTDATQEEDVDDMEGSGEEGDLEGSDSEAAQWADQEQWFGMQ. Residues 528–549 show a composition bias toward acidic residues; that stretch reads TQEEDVDDMEGSGEEGDLEGSD.

It belongs to the APC7 family. In terms of assembly, V-shaped homodimer. The mammalian APC/C is composed at least of 14 distinct subunits ANAPC1, ANAPC2, CDC27/APC3, ANAPC4, ANAPC5, CDC16/APC6, ANAPC7, CDC23/APC8, ANAPC10, ANAPC11, CDC26/APC12, ANAPC13, ANAPC15 and ANAPC16 that assemble into a complex of at least 19 chains with a combined molecular mass of around 1.2 MDa; APC/C interacts with FZR1 and FBXO5.

Its subcellular location is the cytoplasm. It is found in the cytoskeleton. The protein localises to the nucleus. It localises to the spindle. Its pathway is protein modification; protein ubiquitination. In terms of biological role, component of the anaphase promoting complex/cyclosome (APC/C), a cell cycle-regulated E3 ubiquitin ligase that controls progression through mitosis and the G1 phase of the cell cycle. The APC/C complex acts by mediating ubiquitination and subsequent degradation of target proteins: it mainly mediates the formation of 'Lys-11'-linked polyubiquitin chains and, to a lower extent, the formation of 'Lys-48'- and 'Lys-63'-linked polyubiquitin chains. The APC/C complex catalyzes assembly of branched 'Lys-11'-/'Lys-48'-linked branched ubiquitin chains on target proteins. APC7 is not required for the assembly of the APC/C complex, but has an enzyme-substrate adapter activity mediating the processive ubiquitination of specific substrates. Involved in brain development through the specific ubiquitination and clearance of MKI67 from constitutive heterochromatin after neuronal progenitors exit mitosis. The chain is Anaphase-promoting complex subunit 7 (Anapc7) from Mus musculus (Mouse).